An 874-amino-acid polypeptide reads, in one-letter code: Alanine--tRNA ligase (874 aa).

4 residues coordinate Zn(2+): H564, H568, C665, and H669.

Belongs to the class-II aminoacyl-tRNA synthetase family. Zn(2+) is required as a cofactor.

Its subcellular location is the cytoplasm. It carries out the reaction tRNA(Ala) + L-alanine + ATP = L-alanyl-tRNA(Ala) + AMP + diphosphate. In terms of biological role, catalyzes the attachment of alanine to tRNA(Ala) in a two-step reaction: alanine is first activated by ATP to form Ala-AMP and then transferred to the acceptor end of tRNA(Ala). Also edits incorrectly charged Ser-tRNA(Ala) and Gly-tRNA(Ala) via its editing domain. The polypeptide is Alanine--tRNA ligase (Burkholderia orbicola (strain MC0-3)).